Consider the following 1198-residue polypeptide: Sterol 3-beta-glucosyltransferase (1198 aa).

The span at 1 to 11 (MPITQIISASD) shows a compositional bias: polar residues. 2 disordered regions span residues 1-89 (MPIT…DNAD) and 124-162 (SQVD…PEVP). The span at 35 to 51 (RHHRLSRSLSKFKRWRG) shows a compositional bias: basic residues. Residues 52-67 (RSNSSLSMGSSEQQEL) show a composition bias toward low complexity. Serine 76 carries the phosphoserine modification. The span at 146-162 (VKSKKENLKTKSHPEVP) shows a compositional bias: basic and acidic residues. Residues 187–236 (AKLRQRFCLDEQEPFLNDFPAWLLKDVLVQGHIFITTKHFLFFAYLPKNP) form the GRAM 1 domain. The PH domain maps to 238–336 (SVKMSGNLNI…WVNALKKEQF (99 aa)). The tract at residues 427-465 (KSSFGKETPATAEQKNNGEDSKYLNVPTSAVPSSENGKK) is disordered. A compositionally biased stretch (polar residues) spans 452–461 (VPTSAVPSSE). The GRAM 2 domain occupies 570-636 (ERFRYHFKFN…VDVETCYKEK (67 aa)). Serine 693 is modified (phosphoserine). The UDP-alpha-D-glucose site is built by serine 749, arginine 750, aspartate 752, asparagine 1025, asparagine 1053, valine 1054, histidine 1056, histidine 1069, serine 1072, glycine 1073, threonine 1074, aspartate 1093, and glutamine 1094.

Belongs to the glycosyltransferase 28 family.

The protein localises to the cytoplasm. The protein resides in the membrane. It carries out the reaction a sterol + UDP-alpha-D-glucose = a sterol 3-beta-D-glucoside + UDP + H(+). The catalysed reaction is ergosterol + UDP-alpha-D-glucose = ergosteryl 3-beta-D-glucoside + UDP + H(+). In terms of biological role, sterol glycosyltransferase responsible for the glycosylation of ergosterol to form ergosterol-glucoside. Also shows activity in vitro on other sterols such as cholesterol, beta-sitosterol, stigmasterol and tomatidine. In contrasts to what is observed in Pichia pastoris and Aspergillus oryzae, is not involved in cytoplasm to vacuole transport (Cvt), pexophagy or nonselective autophagy in Saccharomyces cerevisiae. This is Sterol 3-beta-glucosyltransferase from Saccharomyces cerevisiae (strain YJM789) (Baker's yeast).